We begin with the raw amino-acid sequence, 543 residues long: Probable protein kinase UbiB (543 aa).

One can recognise a Protein kinase domain in the interval 123–501; the sequence is DFDQQALASA…RVRQGQSRYL (379 aa). Residues 129-137 and K152 each bind ATP; that span reads LASASIAQV. Catalysis depends on D287, which acts as the Proton acceptor. A run of 2 helical transmembrane segments spans residues 498–518 and 519–539; these read SRYLFGVGATLLVSGTILLSG and DVEVFPAWLIAAGIVSWVIGW.

This sequence belongs to the ABC1 family. UbiB subfamily.

The protein resides in the cell inner membrane. It functions in the pathway cofactor biosynthesis; ubiquinone biosynthesis [regulation]. Its function is as follows. Is probably a protein kinase regulator of UbiI activity which is involved in aerobic coenzyme Q (ubiquinone) biosynthesis. In Serratia proteamaculans (strain 568), this protein is Probable protein kinase UbiB.